We begin with the raw amino-acid sequence, 422 residues long: Probable protease eep (422 aa).

Residue His18 participates in Zn(2+) binding. Glu19 is a catalytic residue. His22 contributes to the Zn(2+) binding site. Transmembrane regions (helical) follow at residues 176–196 (FAGP…AVFL), 349–369 (VVFL…LPIP), and 394–414 (EGII…LVTW). A PDZ domain is found at 179-273 (PMNNFILGFI…EEQLTVTPEK (95 aa)).

Belongs to the peptidase M50B family. Requires Zn(2+) as cofactor.

It is found in the cell membrane. In terms of biological role, involved in production of the peptide pheromone cAD1. In Enterococcus faecalis (strain ATCC 700802 / V583), this protein is Probable protease eep (eep).